Reading from the N-terminus, the 295-residue chain is Aspartate carbamoyltransferase catalytic subunit (295 aa).

Arg-49 and Thr-50 together coordinate carbamoyl phosphate. L-aspartate is bound at residue Lys-77. Residues Arg-99, His-127, and Gln-130 each contribute to the carbamoyl phosphate site. L-aspartate contacts are provided by Arg-161 and Arg-212. Gly-251 and Pro-252 together coordinate carbamoyl phosphate.

This sequence belongs to the aspartate/ornithine carbamoyltransferase superfamily. ATCase family. Heterododecamer (2C3:3R2) of six catalytic PyrB chains organized as two trimers (C3), and six regulatory PyrI chains organized as three dimers (R2).

The catalysed reaction is carbamoyl phosphate + L-aspartate = N-carbamoyl-L-aspartate + phosphate + H(+). It participates in pyrimidine metabolism; UMP biosynthesis via de novo pathway; (S)-dihydroorotate from bicarbonate: step 2/3. Catalyzes the condensation of carbamoyl phosphate and aspartate to form carbamoyl aspartate and inorganic phosphate, the committed step in the de novo pyrimidine nucleotide biosynthesis pathway. This chain is Aspartate carbamoyltransferase catalytic subunit, found in Campylobacter jejuni subsp. jejuni serotype O:2 (strain ATCC 700819 / NCTC 11168).